The following is a 273-amino-acid chain: Glutamate 5-kinase (273 aa).

Lysine 15 serves as a coordination point for ATP. Substrate is bound by residues serine 55, aspartate 142, and asparagine 158. ATP contacts are provided by residues 178-179 (SD) and 220-226 (TGGMLSK).

It belongs to the glutamate 5-kinase family.

The protein localises to the cytoplasm. The enzyme catalyses L-glutamate + ATP = L-glutamyl 5-phosphate + ADP. It participates in amino-acid biosynthesis; L-proline biosynthesis; L-glutamate 5-semialdehyde from L-glutamate: step 1/2. Functionally, catalyzes the transfer of a phosphate group to glutamate to form L-glutamate 5-phosphate. The sequence is that of Glutamate 5-kinase from Streptococcus pyogenes serotype M4 (strain MGAS10750).